We begin with the raw amino-acid sequence, 491 residues long: Trypanothione reductase (491 aa).

An FAD-binding site is contributed by 35-52 (DVQATHGPPALVALGGTC). Cysteine 52 and cysteine 57 are oxidised to a cystine. Histidine 461 serves as the catalytic Proton acceptor.

This sequence belongs to the class-I pyridine nucleotide-disulfide oxidoreductase family. In terms of assembly, homodimer. FAD is required as a cofactor.

It is found in the cytoplasm. The catalysed reaction is trypanothione + NADP(+) = trypanothione disulfide + NADPH + H(+). Functionally, trypanothione is the parasite analog of glutathione; this enzyme is the equivalent of glutathione reductase. In Leishmania donovani, this protein is Trypanothione reductase (TPR).